Reading from the N-terminus, the 493-residue chain is Phospholipid transfer protein (493 aa).

The first 17 residues, 1–17 (MALFGALFLALLAGAHA), serve as a signal peptide directing secretion. A glycan (N-linked (GlcNAc...) (complex) asparagine) is linked at asparagine 64. The N-linked (GlcNAc...) asparagine glycan is linked to asparagine 94. N-linked (GlcNAc...) (complex) asparagine glycosylation is present at asparagine 117. A glycan (N-linked (GlcNAc...) asparagine) is linked at asparagine 143. Cysteine 146 and cysteine 185 form a disulfide bridge. Asparagine 245 carries an N-linked (GlcNAc...) (complex) asparagine glycan. N-linked (GlcNAc...) asparagine glycosylation is present at asparagine 398.

This sequence belongs to the BPI/LBP/Plunc superfamily. BPI/LBP family. Post-translationally, glycosylation is necessary for secretion and its phospholipid transfer activity. As to expression, widely expressed. Highest level of expression in the ovary, thymus and placenta, with moderate levels found in the pancreas, small intestine, testis, lung and prostrate. Low level expression in the kidney, liver and spleen, with very low levels found in the heart, colon, skeletal muscle, leukocytes and brain. Expressed in the cortical neurons.

The protein resides in the secreted. It is found in the nucleus. It catalyses the reaction a 1,2-diacyl-sn-glycero-3-phosphocholine(in) = a 1,2-diacyl-sn-glycero-3-phosphocholine(out). The enzyme catalyses a 1,2-diacyl-sn-glycero-3-phosphoethanolamine(in) = a 1,2-diacyl-sn-glycero-3-phosphoethanolamine(out). It carries out the reaction a 1,2-diacyl-sn-glycerol(in) = a 1,2-diacyl-sn-glycerol(out). The catalysed reaction is a 1,2-diacyl-sn-glycero-3-phosphate(in) = a 1,2-diacyl-sn-glycero-3-phosphate(out). It catalyses the reaction a sphingomyelin(in) = a sphingomyelin(out). The enzyme catalyses a 1,2-diacyl-sn-glycero-3-phospho-(1'-sn-glycerol)(in) = a 1,2-diacyl-sn-glycero-3-phospho-(1'-sn-glycerol)(out). It carries out the reaction a 1,2-diacyl-sn-glycero-3-phospho-(1D-myo-inositol)(in) = a 1,2-diacyl-sn-glycero-3-phospho-(1D-myo-inositol)(out). The catalysed reaction is 1-hexadecanoyl-2-(5Z,8Z,11Z,14Z-eicosatetraenoyl)-sn-glycero-3-phosphoethanolamine(in) = 1-hexadecanoyl-2-(5Z,8Z,11Z,14Z-eicosatetraenoyl)-sn-glycero-3-phosphoethanolamine(out). It catalyses the reaction N-(hexadecanoyl)-sphing-4-enine-1-phosphocholine(in) = N-(hexadecanoyl)-sphing-4-enine-1-phosphocholine(out). The enzyme catalyses 1,2-dihexadecanoyl-sn-glycero-3-phosphocholine(in) = 1,2-dihexadecanoyl-sn-glycero-3-phosphocholine(out). Mediates the transfer of phospholipids and free cholesterol from triglyceride-rich lipoproteins (low density lipoproteins or LDL and very low density lipoproteins or VLDL) into high-density lipoproteins (HDL) as well as the exchange of phospholipids between triglyceride-rich lipoproteins themselves. Facilitates the transfer of a spectrum of different lipid molecules, including diacylglycerol, phosphatidic acid, sphingomyelin, phosphatidylcholine, phosphatidylinositol, phosphatidylglycerol, cerebroside and phosphatidyl ethanolamine. Plays an important role in HDL remodeling which involves modulating the size and composition of HDL. Also plays a key role in the uptake of cholesterol from peripheral cells and tissues that is subsequently transported to the liver for degradation and excretion. Two distinct forms of PLTP exist in plasma: an active form that can transfer phosphatidylcholine from phospholipid vesicles to HDL, and an inactive form that lacks this capability. The chain is Phospholipid transfer protein (PLTP) from Homo sapiens (Human).